Here is a 257-residue protein sequence, read N- to C-terminus: Low affinity immunoglobulin gamma Fc region receptor III-A (257 aa).

Residues Met-1–Thr-19 form the signal peptide. Residues His-20 to Gln-209 are Extracellular-facing. Ig-like C2-type domains lie at Pro-25 to Glu-104 and Gly-108 to Thr-190. 2 disulfides stabilise this stretch: Cys-48–Cys-90 and Cys-129–Cys-173. N-linked (GlcNAc...) asparagine glycans are attached at residues Asn-64, Asn-134, and Asn-162. The N-linked (GlcNAc...) asparagine; in variant N-181 glycan is linked to Asp-181. The helical transmembrane segment at Ile-210–Val-230 threads the bilayer. The Cytoplasmic segment spans residues Arg-231–Gly-257.

Forms a heterooligomeric complex with ITAM-containing signaling subunits FCER1G. Interacts (via transmembrane domain) with signaling subunits; this interaction is a prerequisite for receptor complex expression on the cell surface and intracellular signal transduction. Binds the Fc region of antigen-complexed IgG. Expressed in polymorphonuclear leukocytes, pulmonary alveolar macrophages and peripheral blood mononuclear cells (at protein level). Found in spleen, and at very low levels in lymph nodes but not in thymus or liver.

Its subcellular location is the cell membrane. Its function is as follows. Receptor for the invariable Fc fragment of immunoglobulin gamma (IgG). Optimally activated upon binding of clustered antigen-IgG complexes displayed on cell surfaces, triggers lysis of antibody-coated cells, a process known as antibody-dependent cellular cytotoxicity (ADCC). Does not bind free monomeric IgG, thus avoiding inappropriate effector cell activation in the absence of antigenic trigger. Mediates IgG effector functions on natural killer (NK) cells. Binds antigen-IgG complexes generated upon infection and triggers NK cell-dependent cytokine production and degranulation to limit viral load and propagation. Fc-binding subunit that associates with FCER1G adapter to form functional signaling complexes. Following the engagement of antigen-IgG complexes, triggers phosphorylation of immunoreceptor tyrosine-based activation motif (ITAM)-containing adapter with subsequent activation of phosphatidylinositol 3-kinase signaling and sustained elevation of intracellular calcium that ultimately drive NK cell activation. Mediates enhanced ADCC in response to afucosylated IgGs. In Sus scrofa (Pig), this protein is Low affinity immunoglobulin gamma Fc region receptor III-A.